The following is a 201-amino-acid chain: Lipopolysaccharide core heptose(II)-phosphate phosphatase (201 aa).

The N-terminal stretch at 1–35 (MLAFTLRFIKNKRYLATLAGALVIIAGLTSQHAWS) is a signal peptide.

It belongs to the phosphoglycerate mutase family. Ais subfamily.

The protein resides in the periplasm. It functions in the pathway bacterial outer membrane biogenesis; lipopolysaccharide metabolism. In terms of biological role, catalyzes the dephosphorylation of heptose(II) of the outer membrane lipopolysaccharide core. The chain is Lipopolysaccharide core heptose(II)-phosphate phosphatase from Salmonella schwarzengrund (strain CVM19633).